Consider the following 487-residue polypeptide: Malonate-semialdehyde dehydrogenase 3 (487 aa).

Residues Phe-154, Lys-178, Glu-181, Arg-182, and Ser-231 each contribute to the NAD(+) site. Cys-286 acts as the Nucleophile in catalysis. Glu-386 contacts NAD(+).

It belongs to the aldehyde dehydrogenase family. IolA subfamily. Homotetramer.

The enzyme catalyses 3-oxopropanoate + NAD(+) + CoA + H2O = hydrogencarbonate + acetyl-CoA + NADH + H(+). It catalyses the reaction 2-methyl-3-oxopropanoate + NAD(+) + CoA + H2O = propanoyl-CoA + hydrogencarbonate + NADH + H(+). The protein operates within polyol metabolism; myo-inositol degradation into acetyl-CoA; acetyl-CoA from myo-inositol: step 7/7. Functionally, catalyzes the oxidation of malonate semialdehyde (MSA) and methylmalonate semialdehyde (MMSA) into acetyl-CoA and propanoyl-CoA, respectively. Is involved in a myo-inositol catabolic pathway. Bicarbonate, and not CO2, is the end-product of the enzymatic reaction. This Bacillus cereus (strain ZK / E33L) protein is Malonate-semialdehyde dehydrogenase 3.